Here is a 295-residue protein sequence, read N- to C-terminus: Sulfotransferase 1E1 (295 aa).

Residue 48-53 (KSGTTW) participates in 3'-phosphoadenylyl sulfate binding. 106–108 (KTH) provides a ligand contact to substrate. His108 functions as the Proton acceptor in the catalytic mechanism. 3'-phosphoadenylyl sulfate is bound by residues Arg130 and Ser138. At Ser156 the chain carries Phosphoserine. 3'-phosphoadenylyl sulfate contacts are provided by residues Tyr193, 227–232 (TSFQEM), and 257–259 (RKG).

Belongs to the sulfotransferase 1 family. Homodimer. As to expression, testis and at very low level in the placenta.

The protein localises to the cytoplasm. The protein resides in the cytosol. The enzyme catalyses estrone + 3'-phosphoadenylyl sulfate = estrone 3-sulfate + adenosine 3',5'-bisphosphate + H(+). It carries out the reaction 17beta-estradiol + 3'-phosphoadenylyl sulfate = 17beta-estradiol 3-sulfate + adenosine 3',5'-bisphosphate + H(+). The catalysed reaction is (24S)-hydroxycholesterol + 3'-phosphoadenylyl sulfate = (24S)-hydroxycholesterol 3-sulfate + adenosine 3',5'-bisphosphate + H(+). It catalyses the reaction 3beta-hydroxyandrost-5-en-17-one + 3'-phosphoadenylyl sulfate = dehydroepiandrosterone 3-sulfate + adenosine 3',5'-bisphosphate + H(+). The enzyme catalyses 4-ethylphenol + 3'-phosphoadenylyl sulfate = 4-ethylphenyl sulfate + adenosine 3',5'-bisphosphate + H(+). With respect to regulation, inhibited by estradiol. In terms of biological role, sulfotransferase that utilizes 3'-phospho-5'-adenylyl sulfate (PAPS) as sulfonate donor to catalyze the sulfate conjugation of estradiol and estrone. Is a key enzyme in estrogen homeostasis, the sulfation of estrogens leads to their inactivation. Also sulfates dehydroepiandrosterone, pregnenolone, (24S)-hydroxycholesterol and xenobiotic compounds like ethinylestradiol, equalenin, diethyl stilbesterol and 1-naphthol at significantly lower efficiency. Does not sulfonate cortisol, testosterone and dopamine. May play a role in gut microbiota-host metabolic interaction. O-sulfonates 4-ethylphenol (4-EP), a dietary tyrosine-derived metabolite produced by gut bacteria. The product 4-EPS crosses the blood-brain barrier and may negatively regulate oligodendrocyte maturation and myelination, affecting the functional connectivity of different brain regions associated with the limbic system. The chain is Sulfotransferase 1E1 (Sult1e1) from Mus musculus (Mouse).